A 632-amino-acid chain; its full sequence is tRNA uridine 5-carboxymethylaminomethyl modification enzyme MnmG (632 aa).

13–18 (GGGHAG) contacts FAD. 273–287 (GPRYCPSIEDKIHRF) contacts NAD(+).

It belongs to the MnmG family. In terms of assembly, homodimer. Heterotetramer of two MnmE and two MnmG subunits. The cofactor is FAD.

Its subcellular location is the cytoplasm. In terms of biological role, NAD-binding protein involved in the addition of a carboxymethylaminomethyl (cmnm) group at the wobble position (U34) of certain tRNAs, forming tRNA-cmnm(5)s(2)U34. The chain is tRNA uridine 5-carboxymethylaminomethyl modification enzyme MnmG from Psychrobacter arcticus (strain DSM 17307 / VKM B-2377 / 273-4).